A 251-amino-acid chain; its full sequence is Hydroxyacylglutathione hydrolase (251 aa).

Residues His54, His56, Asp58, His59, His113, Asp140, and His178 each contribute to the Zn(2+) site.

Belongs to the metallo-beta-lactamase superfamily. Glyoxalase II family. In terms of assembly, monomer. Zn(2+) serves as cofactor.

The catalysed reaction is an S-(2-hydroxyacyl)glutathione + H2O = a 2-hydroxy carboxylate + glutathione + H(+). It participates in secondary metabolite metabolism; methylglyoxal degradation; (R)-lactate from methylglyoxal: step 2/2. In terms of biological role, thiolesterase that catalyzes the hydrolysis of S-D-lactoyl-glutathione to form glutathione and D-lactic acid. This chain is Hydroxyacylglutathione hydrolase, found in Synechococcus sp. (strain CC9902).